A 312-amino-acid polypeptide reads, in one-letter code: Mas-related G-protein coupled receptor member E (312 aa).

Topologically, residues 1–20 (MMEPREAGQHVGAANGAQED) are extracellular. Residues 21–41 (VAFNLIILSLTEGLGLGGLLG) form a helical membrane-spanning segment. The Cytoplasmic segment spans residues 42-59 (NGAVLWLLSSNVYRNPFA). The chain crosses the membrane as a helical span at residues 60 to 80 (IYLLDVACADLIFLGCHMVAI). Residues 81-106 (VPDLLQGRLDFPGFVQTSLATLRFFC) are Extracellular-facing. Residues 107-127 (YIVGLSLLAAVSVEQCLAALF) traverse the membrane as a helical segment. Over 128–141 (PAWYSCRRPRHLTT) the chain is Cytoplasmic. Residues 142–162 (CVCALTWALCLLLHLLLSGAC) form a helical membrane-spanning segment. The Extracellular portion of the chain corresponds to 163 to 176 (TQFFGEPSRHLCRT). A helical transmembrane segment spans residues 177–197 (LWLVAAVLLALLCCTMCGASL). Residues 198–217 (MLLLRVERGPQRPPPRGFPG) are Cytoplasmic-facing. The chain crosses the membrane as a helical span at residues 218 to 238 (LILLTVLLFLFCGLPFGIYWL). Topologically, residues 239–241 (SRN) are extracellular. A helical membrane pass occupies residues 242-262 (LLWYIPHYFYHFSFLMAAVHC). Residues 263 to 312 (AAKPVVYFCLGSAQGRRLPLRLVLQRALGDEAELGAVRETSRRGLVDIAA) lie on the Cytoplasmic side of the membrane.

The protein belongs to the G-protein coupled receptor 1 family. Mas subfamily.

The protein resides in the cell membrane. Its function is as follows. Orphan receptor. May regulate nociceptor function and/or development, including the sensation or modulation of pain. This chain is Mas-related G-protein coupled receptor member E (MRGPRE), found in Homo sapiens (Human).